Here is a 207-residue protein sequence, read N- to C-terminus: MAKTYDYLFKLLLIGDSGVGKTCLLFRFSEDAFNTTFISTIGIDFKIRTIELDGKKIKLQIWDTAGQERFRTITTAYYRGAMGIMLVYDITNEKSFDNIKNWIRNIEEHASSDVERMILGNKCDMNDKRQVSKERGEKLAIDYGIKFLEASAKSSMNVEEAFFTLARDIMTKLNRKMNDSNSSGAGGPVKITENRSKKTSFFRCLLL.

GTP contacts are provided by serine 17, glycine 18, valine 19, glycine 20, lysine 21, threonine 22, cysteine 23, threonine 35, serine 39, and threonine 40. Threonine 22 is a binding site for Mg(2+). 2 consecutive short sequence motifs (switch) follow at residues 31-45 and 63-80; these read DAFN…GIDF and DTAG…YYRG. Residues threonine 40 and aspartate 63 each coordinate Mg(2+). Glycine 66 provides a ligand contact to GTP. At threonine 72 the chain carries Phosphothreonine. Residues asparagine 121, lysine 122, aspartate 124, alanine 152, and lysine 153 each contribute to the GTP site. Phosphoserine is present on residues serine 180 and serine 183. Cysteine 204 carries the post-translational modification Cysteine methyl ester. Cysteine 204 is lipidated: S-geranylgeranyl cysteine. The propeptide at 205–207 is removed in mature form; sequence LLL.

This sequence belongs to the small GTPase superfamily. Rab family. In terms of assembly, associated with actin, delta-catenin and alpha and beta tubulins. Interacts with OTOF. Interacts with PEX5R. Interacts with RAB3IP. Interacts with VIM. Interacts with CDH1. Interacts with MICALL2. Interacts with GDI1, GDI2, CHML and CHM; phosphorylation at Thr-72 disrupts these interactions. Interacts with MICAL1. Mg(2+) serves as cofactor. Post-translationally, phosphorylation of Thr-72 in the switch II region by LRRK2 prevents the association of RAB regulatory proteins, including CHM, CHML and RAB GDP dissociation inhibitors GDI1 and GDI2.

The protein localises to the cell membrane. It localises to the cytoplasmic vesicle. It is found in the phagosome membrane. The protein resides in the endosome membrane. It catalyses the reaction GTP + H2O = GDP + phosphate + H(+). Regulated by guanine nucleotide exchange factors (GEFs) including RAB3IP/RABIN8 which promotes the exchange of bound GDP for free GTP. Regulated by GTPase activating proteins (GAPs) which increase the GTP hydrolysis activity. Inhibited by GDP dissociation inhibitors (GDIs). Its function is as follows. The small GTPases Rab are key regulators of intracellular membrane trafficking, from the formation of transport vesicles to their fusion with membranes. Rabs cycle between an inactive GDP-bound form and an active GTP-bound form that is able to recruit to membranes different sets of downstream effectors directly responsible for vesicle formation, movement, tethering and fusion. RAB8B may be involved in polarized vesicular trafficking and neurotransmitter release. May participate in cell junction dynamics in Sertoli cells. May also participate in the export of a subset of neosynthesized proteins through a Rab8-Rab10-Rab11-dependent endososomal export route. This Bos taurus (Bovine) protein is Ras-related protein Rab-8B (RAB8B).